A 69-amino-acid polypeptide reads, in one-letter code: Proteinase inhibitor (69 aa).

At Ser1 the chain carries N-acetylserine. Cys4 and Cys49 are oxidised to a cystine.

In vitro, strong inhibitor of bovine beta-trypsin, weak inhibitor of alpha-chymotrypsin, subtilisin BPN', subtilisin Carlsberg and cathepsin G. This chain is Proteinase inhibitor, found in Linum usitatissimum (Flax).